Reading from the N-terminus, the 201-residue chain is Holliday junction branch migration complex subunit RuvA (201 aa).

Residues 1-64 (MIGRLHGKII…EDAHLLFGFA (64 aa)) are domain I. The interval 65–143 (QKQDRTLFRE…GVAQSDFFEE (79 aa)) is domain II. Residues 144-154 (HSVETIVATHS) form a flexible linker region. The tract at residues 154 to 201 (SHDPADEARDALVALGYKLADAEKMIKKVNKAGATSEQLIREALKASL) is domain III.

The protein belongs to the RuvA family. In terms of assembly, homotetramer. Forms an RuvA(8)-RuvB(12)-Holliday junction (HJ) complex. HJ DNA is sandwiched between 2 RuvA tetramers; dsDNA enters through RuvA and exits via RuvB. An RuvB hexamer assembles on each DNA strand where it exits the tetramer. Each RuvB hexamer is contacted by two RuvA subunits (via domain III) on 2 adjacent RuvB subunits; this complex drives branch migration. In the full resolvosome a probable DNA-RuvA(4)-RuvB(12)-RuvC(2) complex forms which resolves the HJ.

The protein localises to the cytoplasm. In terms of biological role, the RuvA-RuvB-RuvC complex processes Holliday junction (HJ) DNA during genetic recombination and DNA repair, while the RuvA-RuvB complex plays an important role in the rescue of blocked DNA replication forks via replication fork reversal (RFR). RuvA specifically binds to HJ cruciform DNA, conferring on it an open structure. The RuvB hexamer acts as an ATP-dependent pump, pulling dsDNA into and through the RuvAB complex. HJ branch migration allows RuvC to scan DNA until it finds its consensus sequence, where it cleaves and resolves the cruciform DNA. The polypeptide is Holliday junction branch migration complex subunit RuvA (Actinobacillus pleuropneumoniae serotype 7 (strain AP76)).